A 463-amino-acid chain; its full sequence is Asparagine--tRNA ligase (463 aa).

The protein belongs to the class-II aminoacyl-tRNA synthetase family. Homodimer.

Its subcellular location is the cytoplasm. The catalysed reaction is tRNA(Asn) + L-asparagine + ATP = L-asparaginyl-tRNA(Asn) + AMP + diphosphate + H(+). The polypeptide is Asparagine--tRNA ligase (Bacillus cereus (strain ZK / E33L)).